Consider the following 878-residue polypeptide: Alanine--tRNA ligase (878 aa).

Zn(2+)-binding residues include H567, H571, C669, and H673.

Belongs to the class-II aminoacyl-tRNA synthetase family. The cofactor is Zn(2+).

The protein resides in the cytoplasm. The catalysed reaction is tRNA(Ala) + L-alanine + ATP = L-alanyl-tRNA(Ala) + AMP + diphosphate. In terms of biological role, catalyzes the attachment of alanine to tRNA(Ala) in a two-step reaction: alanine is first activated by ATP to form Ala-AMP and then transferred to the acceptor end of tRNA(Ala). Also edits incorrectly charged Ser-tRNA(Ala) and Gly-tRNA(Ala) via its editing domain. This Rickettsia massiliae (strain Mtu5) protein is Alanine--tRNA ligase.